The chain runs to 965 residues: Chondroitin synthase (965 aa).

The segment at 132-418 (FTWYKNRKKS…IVKEKVPYIY (287 aa)) is galactosaminyltransferase; A1 domain. UDP-N-acetyl-alpha-D-galactosamine is bound by residues proline 158, arginine 162, aspartate 189, tyrosine 218, arginine 224, and 240–241 (DC). Aspartate 242 provides a ligand contact to Mn(2+). UDP-N-acetyl-alpha-D-galactosamine is bound at residue 362–363 (ED). Histidine 387 serves as a coordination point for Mn(2+). Residues 419-683 (RKLLPIEDSH…ESRKYIFNKT (265 aa)) form a glucuronosyltransferase; A2 domain region. UDP-alpha-D-glucuronate is bound by residues tyrosine 442, aspartate 470, and 518 to 521 (QLDS). Position 522 (aspartate 522) interacts with Mn(2+). Residues histidine 582 and 604 to 605 (AV) each bind UDP-alpha-D-glucuronate. Residue histidine 632 coordinates Mn(2+).

The protein belongs to the glycosyltransferase 2 family. CS/HAS subfamily. The cofactor is Mn(2+).

It localises to the cell membrane. It catalyses the reaction 3-O-(beta-D-GlcA-(1-&gt;3)-beta-D-GalNAc-(1-&gt;4)-beta-D-GlcA-(1-&gt;3)-beta-D-Gal-(1-&gt;3)-beta-D-Gal-(1-&gt;4)-beta-D-Xyl)-L-seryl-[protein] + UDP-N-acetyl-alpha-D-galactosamine = 3-O-(beta-D-GalNAc-(1-&gt;4)-beta-D-GlcA-(1-&gt;3)-beta-D-GalNAc-(1-&gt;4)-beta-D-GlcA-(1-&gt;3)-beta-D-Gal-(1-&gt;3)-beta-D-Gal-(1-&gt;4)-beta-D-Xyl)-L-seryl-[protein] + UDP + H(+). The catalysed reaction is 3-O-{beta-D-GlcA-(1-&gt;3)-[beta-D-GalNAc-(1-&gt;4)-beta-D-GlcA-(1-&gt;3)](n)-beta-D-GalNAc-(1-&gt;4)-beta-D-GlcA-(1-&gt;3)-beta-D-Gal-(1-&gt;3)-beta-D-Gal-(1-&gt;4)-beta-D-Xyl}-L-seryl-[protein] + UDP-N-acetyl-alpha-D-galactosamine = 3-O-{[beta-D-GalNAc-(1-&gt;4)-beta-D-GlcA-(1-&gt;3)](n+1)-beta-D-GalNAc-(1-&gt;4)-beta-D-GlcA-(1-&gt;3)-beta-D-Gal-(1-&gt;3)-beta-D-Gal-(1-&gt;4)-beta-D-Xyl}-L-seryl-[protein] + UDP + H(+). The enzyme catalyses 3-O-(beta-D-GalNAc-(1-&gt;4)-beta-D-GlcA-(1-&gt;3)-beta-D-Gal-(1-&gt;3)-beta-D-Gal-(1-&gt;4)-beta-D-Xyl)-L-seryl-[protein] + UDP-alpha-D-glucuronate = 3-O-(beta-D-GlcA-(1-&gt;3)-beta-D-GalNAc-(1-&gt;4)-beta-D-GlcA-(1-&gt;3)-beta-D-Gal-(1-&gt;3)-beta-D-Gal-(1-&gt;4)-beta-D-Xyl)-L-seryl-[protein] + UDP + H(+). It carries out the reaction 3-O-{[beta-D-GalNAc-(1-&gt;4)-beta-D-GlcA-(1-&gt;3)](n)-beta-D-GalNAc-(1-&gt;4)-beta-D-GlcA-(1-&gt;3)-beta-D-Gal-(1-&gt;3)-beta-D-Gal-(1-&gt;4)-beta-D-Xyl}-L-seryl-[protein] + UDP-alpha-D-glucuronate = 3-O-{beta-D-GlcA-(1-&gt;3)-[beta-D-GalNAc-(1-&gt;4)-beta-D-GlcA-(1-&gt;3)](n)-beta-D-GalNAc-(1-&gt;4)-beta-D-GlcA-(1-&gt;3)-beta-D-Gal-(1-&gt;3)-beta-D-Gal-(1-&gt;4)-beta-D-Xyl}-L-seryl-[protein] + UDP + H(+). In terms of biological role, glycosyltransferase that catalyzes elongation of chondroitin, a polysaccharide composed of a repeating disaccharide of N-acetylgalactosamine (GalNAc) and glucuronic acid (GlcUA) units, by alternatively transferring the GlcUA and GalNAc moiety from UDP-GlcUA and UDP-GalNAc to the non-reducing ends of the chondroitin chain. Each chondroitin unit has the composition beta-(1-&gt;4)-GlcUA-beta-(1-&gt;3)-GalNAc. This chain is Chondroitin synthase (fcbD), found in Pasteurella multocida (strain Pm70).